An 82-amino-acid chain; its full sequence is uncharacterized protein (82 aa).

2 helical membrane-spanning segments follow: residues 32–52 (PFSI…IGIL) and 59–79 (SKPL…FNII).

The protein resides in the cell membrane. This is an uncharacterized protein from Rickettsia prowazekii (strain Madrid E).